A 250-amino-acid chain; its full sequence is Triosephosphate isomerase (250 aa).

Residue 9-11 (NWK) coordinates substrate. Catalysis depends on histidine 94, which acts as the Electrophile. Glutamate 166 (proton acceptor) is an active-site residue. Substrate contacts are provided by residues glycine 172, serine 212, and 233–234 (GG).

Belongs to the triosephosphate isomerase family. Homodimer.

Its subcellular location is the cytoplasm. The catalysed reaction is D-glyceraldehyde 3-phosphate = dihydroxyacetone phosphate. The protein operates within carbohydrate biosynthesis; gluconeogenesis. It participates in carbohydrate degradation; glycolysis; D-glyceraldehyde 3-phosphate from glycerone phosphate: step 1/1. Its function is as follows. Involved in the gluconeogenesis. Catalyzes stereospecifically the conversion of dihydroxyacetone phosphate (DHAP) to D-glyceraldehyde-3-phosphate (G3P). The sequence is that of Triosephosphate isomerase from Thermus thermophilus (strain ATCC 27634 / DSM 579 / HB8).